A 180-amino-acid polypeptide reads, in one-letter code: dCTP deaminase (180 aa).

Residues 101 to 106 (KSSFAR) and Asp117 contribute to the dCTP site. The active-site Proton donor/acceptor is Glu127. 2 residues coordinate dCTP: Tyr159 and Gln168.

Belongs to the dCTP deaminase family. In terms of assembly, homotrimer.

The catalysed reaction is dCTP + H2O + H(+) = dUTP + NH4(+). It functions in the pathway pyrimidine metabolism; dUMP biosynthesis; dUMP from dCTP (dUTP route): step 1/2. Functionally, catalyzes the deamination of dCTP to dUTP. The chain is dCTP deaminase from Ignicoccus hospitalis (strain KIN4/I / DSM 18386 / JCM 14125).